The primary structure comprises 141 residues: Hemoglobin subunit alpha (141 aa).

The region spanning 1 to 141 (VLSPADKTNV…VSTVLTSKYR (141 aa)) is the Globin domain. Ser3 is subject to Phosphoserine. Lys7 is modified (N6-succinyllysine). Phosphothreonine is present on Thr8. Position 11 is an N6-succinyllysine (Lys11). Lys16 carries the N6-acetyllysine; alternate modification. The residue at position 16 (Lys16) is an N6-succinyllysine; alternate. A Phosphotyrosine modification is found at Tyr24. Ser35 bears the Phosphoserine mark. Position 40 is an N6-succinyllysine (Lys40). Ser49 carries the post-translational modification Phosphoserine. His58 lines the O2 pocket. A heme b-binding site is contributed by His87. The residue at position 102 (Ser102) is a Phosphoserine. A Phosphothreonine modification is found at Thr108. Phosphoserine is present on residues Ser124 and Ser131. A phosphothreonine mark is found at Thr134 and Thr137. The residue at position 138 (Ser138) is a Phosphoserine.

This sequence belongs to the globin family. Heterotetramer of two alpha chains and two beta chains. Red blood cells.

Functionally, involved in oxygen transport from the lung to the various peripheral tissues. In terms of biological role, hemopressin acts as an antagonist peptide of the cannabinoid receptor CNR1. Hemopressin-binding efficiently blocks cannabinoid receptor CNR1 and subsequent signaling. In Urocitellus parryii (Arctic ground squirrel), this protein is Hemoglobin subunit alpha (HBA).